The primary structure comprises 331 residues: 6-phosphogluconolactonase (331 aa).

Belongs to the cycloisomerase 2 family.

The catalysed reaction is 6-phospho-D-glucono-1,5-lactone + H2O = 6-phospho-D-gluconate + H(+). Its pathway is carbohydrate degradation; pentose phosphate pathway; D-ribulose 5-phosphate from D-glucose 6-phosphate (oxidative stage): step 2/3. In terms of biological role, catalyzes the hydrolysis of 6-phosphogluconolactone to 6-phosphogluconate. This chain is 6-phosphogluconolactonase, found in Citrobacter koseri (strain ATCC BAA-895 / CDC 4225-83 / SGSC4696).